A 292-amino-acid chain; its full sequence is Ribosomal protein L11 methyltransferase (292 aa).

Residues T144, G165, D187, and N229 each coordinate S-adenosyl-L-methionine.

This sequence belongs to the methyltransferase superfamily. PrmA family.

The protein resides in the cytoplasm. The catalysed reaction is L-lysyl-[protein] + 3 S-adenosyl-L-methionine = N(6),N(6),N(6)-trimethyl-L-lysyl-[protein] + 3 S-adenosyl-L-homocysteine + 3 H(+). Functionally, methylates ribosomal protein L11. The chain is Ribosomal protein L11 methyltransferase from Pseudomonas savastanoi pv. phaseolicola (strain 1448A / Race 6) (Pseudomonas syringae pv. phaseolicola (strain 1448A / Race 6)).